The primary structure comprises 491 residues: Galactose-1-phosphate uridylyltransferase (491 aa).

Belongs to the galactose-1-phosphate uridylyltransferase type 2 family.

It is found in the cytoplasm. It catalyses the reaction alpha-D-galactose 1-phosphate + UDP-alpha-D-glucose = alpha-D-glucose 1-phosphate + UDP-alpha-D-galactose. Its pathway is carbohydrate metabolism; galactose metabolism. This Streptococcus mutans serotype c (strain ATCC 700610 / UA159) protein is Galactose-1-phosphate uridylyltransferase (galT).